The following is a 719-amino-acid chain: MRENWAVVALFTLCIVGFELRFIHGATDASDTSALNTLFSGMHSPAQLTQWTAAAGDPCGQNWRGVTCSGSRVTQIKLSGLELSGTLGGYMLDKLTSLTELDLSSNNLGGDLPYQFPPNLQRLNLANNQFTGAASYSLSQITPLKYLNLGHNQFKGQIAIDFSKLDSLTTLDFSFNSFTNSLPATFSSLTSLKSLYLQNNQFSGTVDVLAGLPLETLNIANNDFTGWIPSSLKGITLIKDGNSFNTGPAPPPPPGTPPIRGSPSRKSGGRESRSSDESTRNGDSKKSGIGAGAIAGIIISLLVVTALLVAFFLFRRKKSKRSSPMDIEKTDNQPFTLASNDFHENNSIQSSSSVETKKLDTSLSINLRPPPIDRNKSFDDEDSTRKPIAVKKSTVVVPSNVRLYSVADLQIATGSFSVDNLLGEGTFGRVYRAEFDDGKVLAVKKIDSSALPHGMTDDFIEMVSKIANLDHPNVTKLVGYCAEHGQHLVVYEFHKNGSLHDFLHLSEEESKALVWNSRVKIALGTARALEYLHEVCSPSIVDKNIKSANILLDSELNPHLSDSGLASFLPTANELLNQTDEGYSAPEVSMSGQYSLKSDIYSFGVVMLELLTGRKPFDSTRSRSEQSLVRWATPQLHDIDALAKMVDPALKGLYPVKSLSRFADVIALCVQPEPEFRPPMSEVVQALVVLVQRANMSKRTVGVDPSQRAGSADTTSDYM.

The N-terminal stretch at 1-29 (MRENWAVVALFTLCIVGFELRFIHGATDA) is a signal peptide. Residues 30–293 (SDTSALNTLF…SKKSGIGAGA (264 aa)) lie on the Extracellular side of the membrane. LRR repeat units lie at residues 97 to 118 (SLTE…QFPP), 119 to 140 (NLQR…SLSQ), 143 to 164 (PLKY…DFSK), 167 to 190 (SLTT…SSLT), 191 to 213 (SLKS…AGLP), and 214 to 234 (LETL…SLKG). The interval 242–287 (NSFNTGPAPPPPPGTPPIRGSPSRKSGGRESRSSDESTRNGDSKKS) is disordered. The segment covering 248-257 (PAPPPPPGTP) has biased composition (pro residues). The segment covering 268–286 (GGRESRSSDESTRNGDSKK) has biased composition (basic and acidic residues). The chain crosses the membrane as a helical span at residues 294–314 (IAGIIISLLVVTALLVAFFLF). At 315–719 (RRKKSKRSSP…GSADTTSDYM (405 aa)) the chain is on the cytoplasmic side. Disordered regions lie at residues 322–355 (SSPM…SSVE) and 364–383 (SINL…DEDS). The segment covering 332–354 (NQPFTLASNDFHENNSIQSSSSV) has biased composition (polar residues). Ser-377 bears the Phosphoserine mark. Residues 416–690 (FSVDNLLGEG…SEVVQALVVL (275 aa)) enclose the Protein kinase domain. ATP is bound by residues 422 to 430 (LGEGTFGRV) and Lys-444. Residues 700-719 (TVGVDPSQRAGSADTTSDYM) are disordered. Over residues 708–719 (RAGSADTTSDYM) the composition is skewed to polar residues.

Belongs to the protein kinase superfamily. Ser/Thr protein kinase family. As to expression, expressed in seedlings, roots, stems, leaves, flowers and siliques.

It localises to the membrane. This is Protein STRUBBELIG-RECEPTOR FAMILY 6 (SRF6) from Arabidopsis thaliana (Mouse-ear cress).